The sequence spans 932 residues: F-box protein COS111 (932 aa).

Residues 29 to 63 (VSAKHRPSSTGVYGHDASTVDHASRSNNNLNLTRS) are disordered. The segment covering 53 to 63 (RSNNNLNLTRS) has biased composition (low complexity). Positions 146–193 (RKEISDLPDEVLRNILSNVKDDQRTLVNCLYVNKAFYNATKPTLYERP) constitute an F-box domain. Residues 346–358 (LSEGKSSDNGNNG) are compositionally biased toward polar residues. Disordered stretches follow at residues 346–369 (LSEG…SVSS), 389–450 (TLSG…SNWF), 470–500 (ISSK…TEPF), and 863–893 (SVLP…SNDP). Low complexity-rich tracts occupy residues 395–431 (NNSS…SQID) and 438–447 (TSSKSTSSTS). The segment covering 876–890 (DDTNNGENTIAQPFS) has biased composition (polar residues).

F-box protein probably involved in ubiquitin conjugation pathway. This Candida glabrata (strain ATCC 2001 / BCRC 20586 / JCM 3761 / NBRC 0622 / NRRL Y-65 / CBS 138) (Yeast) protein is F-box protein COS111 (COS111).